The following is a 327-amino-acid chain: MEAIKGSDVNVPDAVFAWMLDGRGGVKPLENTDVIDEAHPCWLHLNYVHHDSAQWLATTPLLPNNVRDALAGESTRPRVSRLGEGTLITLRCINGSTDERPDQLVAMRVYMDGRLIVSTRQRKVLALDDVVSDLEEGTGPTDCGGWLVDVCDALTDHSSEFIEQLHDKIIDLEDNLLDQQIPPRGFLALLRKQLIVMRRYMAPQRDVYARLASERLPWMSDDQRRRMQDIADRLGRGLDEIDACIARTGVMADEIAQVMQENLARRTYTMSLMAMVFLPSTFLTGLFGVNLGGIPGGGWQFGFSIFCILLVVLIGGVALWLHRSKWL.

Over 1–273 (MEAIKGSDVN…ARRTYTMSLM (273 aa)) the chain is Cytoplasmic. A helical transmembrane segment spans residues 274–294 (AMVFLPSTFLTGLFGVNLGGI). Topologically, residues 295–300 (PGGGWQ) are periplasmic. Residues 301–321 (FGFSIFCILLVVLIGGVALWL) form a helical membrane-spanning segment. At 322–327 (HRSKWL) the chain is on the cytoplasmic side.

Belongs to the CorA metal ion transporter (MIT) (TC 1.A.35) family.

The protein resides in the cell inner membrane. It catalyses the reaction Zn(2+)(out) + H(+)(out) = Zn(2+)(in) + H(+)(in). In terms of biological role, zinc transporter. Acts as a Zn(2+):proton symporter, which likely mediates zinc ion uptake. In Escherichia coli O139:H28 (strain E24377A / ETEC), this protein is Zinc transport protein ZntB.